The following is a 504-amino-acid chain: Glycerol kinase (504 aa).

Thr14 serves as a coordination point for ADP. 3 residues coordinate ATP: Thr14, Thr15, and Ser16. Thr14 serves as a coordination point for sn-glycerol 3-phosphate. Arg18 is a binding site for ADP. Residues Arg84, Glu85, Tyr136, and Asp246 each contribute to the sn-glycerol 3-phosphate site. Residues Arg84, Glu85, Tyr136, Asp246, and Gln247 each coordinate glycerol. ADP contacts are provided by Thr268 and Gly311. The ATP site is built by Thr268, Gly311, Gln315, and Gly412. Residues Gly412 and Asn416 each contribute to the ADP site.

The protein belongs to the FGGY kinase family.

It catalyses the reaction glycerol + ATP = sn-glycerol 3-phosphate + ADP + H(+). Its pathway is polyol metabolism; glycerol degradation via glycerol kinase pathway; sn-glycerol 3-phosphate from glycerol: step 1/1. Inhibited by fructose 1,6-bisphosphate (FBP). In terms of biological role, key enzyme in the regulation of glycerol uptake and metabolism. Catalyzes the phosphorylation of glycerol to yield sn-glycerol 3-phosphate. The chain is Glycerol kinase from Aliivibrio fischeri (strain ATCC 700601 / ES114) (Vibrio fischeri).